A 192-amino-acid chain; its full sequence is Pyridoxal 5'-phosphate synthase subunit PdxT (192 aa).

Residue 47–49 (GES) participates in L-glutamine binding. Cys-78 (nucleophile) is an active-site residue. Residues Arg-105 and 139–140 (IR) each bind L-glutamine. Active-site charge relay system residues include His-175 and Glu-177.

Belongs to the glutaminase PdxT/SNO family. As to quaternary structure, in the presence of PdxS, forms a dodecamer of heterodimers. Only shows activity in the heterodimer.

It catalyses the reaction aldehydo-D-ribose 5-phosphate + D-glyceraldehyde 3-phosphate + L-glutamine = pyridoxal 5'-phosphate + L-glutamate + phosphate + 3 H2O + H(+). It carries out the reaction L-glutamine + H2O = L-glutamate + NH4(+). It participates in cofactor biosynthesis; pyridoxal 5'-phosphate biosynthesis. Catalyzes the hydrolysis of glutamine to glutamate and ammonia as part of the biosynthesis of pyridoxal 5'-phosphate. The resulting ammonia molecule is channeled to the active site of PdxS. The protein is Pyridoxal 5'-phosphate synthase subunit PdxT of Solibacter usitatus (strain Ellin6076).